We begin with the raw amino-acid sequence, 453 residues long: UDP-glucosyltransferase avaP (453 aa).

This sequence belongs to the UDP-glycosyltransferase family.

Its pathway is secondary metabolite biosynthesis. Its function is as follows. UDP-glucosyltransferase; part of the cluster that mediates the biosynthesis of a highly modified cyclo-arginine-tryptophan dipeptide (cRW). The first step of the pathway is perfornmed by the arginine-containing cyclodipeptide synthase (RCPDS) avaA that acts as the scaffold-generating enzyme and is responsible for formation of the cyclo-Arg-Trp (cRW) diketopiperazine. AvaB then acts as a multifunctional flavoenzyme that is responsible for generating the cyclo-Arg-formylkynurenine DKP, which can be deformylated by avaC. AvaB then further catalyzes an additional N-oxidation followed by cyclization and dehydration. The next step is an N-acetylation of the guanidine group catalyzed by the arginine N-acetyltransferase avaD. The roles of the additional enzymes identified within the ava cluster still have to be determined. The polypeptide is UDP-glucosyltransferase avaP (Aspergillus versicolor).